The following is a 371-amino-acid chain: MSL complex subunit 3B (371 aa).

Disordered stretches follow at residues 1–44 (MATL…READ) and 160–229 (EERA…SPQA). Over residues 8–44 (PKDDGEGKDEGGSDRGDGDPKPKGKKEVEAHTRREAD) the composition is skewed to basic and acidic residues. One can recognise an MRG domain in the interval 44–367 (DERAVRIPIP…CEAHYSSKNP (324 aa)). Basic residues predominate over residues 206–216 (APRRSTRHSTH).

It localises to the nucleus. In terms of biological role, probable non-catalytic component of the MSL histone acetyltransferase complex, a multiprotein complex that mediates the majority of histone H4 acetylation at 'Lys-16' (H4K16ac), an epigenetic mark that prevents chromatin compaction. The chain is MSL complex subunit 3B from Rattus norvegicus (Rat).